Reading from the N-terminus, the 240-residue chain is uncharacterized protein (240 aa).

Disordered stretches follow at residues 125-148 (RRLDFSSEDGEEEEENDYIDEDVD) and 177-240 (DESN…RKSR). Residues 130–148 (SSEDGEEEEENDYIDEDVD) show a composition bias toward acidic residues. A compositionally biased stretch (basic and acidic residues) spans 192–203 (SPRKSHIDHDFV). Over residues 204 to 217 (IPEDEMLSEEEEQE) the composition is skewed to acidic residues. At S231 the chain carries Phosphoserine.

This sequence belongs to the UTP5 family.

It is found in the cytoplasm. It localises to the nucleus. This is an uncharacterized protein from Schizosaccharomyces pombe (strain 972 / ATCC 24843) (Fission yeast).